A 129-amino-acid chain; its full sequence is Small ribosomal subunit protein uS11 (129 aa).

It belongs to the universal ribosomal protein uS11 family. In terms of assembly, part of the 30S ribosomal subunit. Interacts with proteins S7 and S18. Binds to IF-3.

Functionally, located on the platform of the 30S subunit, it bridges several disparate RNA helices of the 16S rRNA. Forms part of the Shine-Dalgarno cleft in the 70S ribosome. The sequence is that of Small ribosomal subunit protein uS11 from Bacillus anthracis (strain A0248).